A 413-amino-acid chain; its full sequence is Serine hydroxymethyltransferase (413 aa).

Residues leucine 119 and 123 to 125 (GHL) contribute to the (6S)-5,6,7,8-tetrahydrofolate site. Residue lysine 228 is modified to N6-(pyridoxal phosphate)lysine. 351 to 353 (SPF) provides a ligand contact to (6S)-5,6,7,8-tetrahydrofolate.

It belongs to the SHMT family. In terms of assembly, homodimer. Pyridoxal 5'-phosphate serves as cofactor.

The protein resides in the cytoplasm. It catalyses the reaction (6R)-5,10-methylene-5,6,7,8-tetrahydrofolate + glycine + H2O = (6S)-5,6,7,8-tetrahydrofolate + L-serine. Its pathway is one-carbon metabolism; tetrahydrofolate interconversion. It participates in amino-acid biosynthesis; glycine biosynthesis; glycine from L-serine: step 1/1. Catalyzes the reversible interconversion of serine and glycine with tetrahydrofolate (THF) serving as the one-carbon carrier. This reaction serves as the major source of one-carbon groups required for the biosynthesis of purines, thymidylate, methionine, and other important biomolecules. Also exhibits THF-independent aldolase activity toward beta-hydroxyamino acids, producing glycine and aldehydes, via a retro-aldol mechanism. This chain is Serine hydroxymethyltransferase, found in Anoxybacillus flavithermus (strain DSM 21510 / WK1).